The chain runs to 408 residues: Putative gustatory receptor 98c (408 aa).

Residues 1–42 (MEMEAKRSRLLTTARPYLQVLSLFGLTPPAEFFTRTLRKRRR) lie on the Cytoplasmic side of the membrane. The chain crosses the membrane as a helical span at residues 43–63 (FCWMAGYSLYLIAILLMVFYE). Over 64–92 (FHANIVSLHLEIYKFHVEDFSKVMGRTQK) the chain is Extracellular. The chain crosses the membrane as a helical span at residues 93 to 113 (FLIVAIATCNQLNILLNYGRL). The Cytoplasmic portion of the chain corresponds to 114–146 (GLIYDEIANLDLGIDKSSKNFCGKSHWWSFRLR). Residues 147–167 (LTLSIGLWMVIIIGVIPRLTL) traverse the membrane as a helical segment. Residues 168–183 (GRAGPFFHWVNQVLTQ) are Extracellular-facing. The helical transmembrane segment at 184-204 (IILIMLQLKGPEYCLFVLLVY) threads the bilayer. At 205-261 (ELILRTRHVLEQLKDDLEDFDCGARIQELCVTLKQNQLLIGRIWRLVDEIGAYFRWS) the chain is on the cytoplasmic side. A helical membrane pass occupies residues 262–282 (MTLLFLYNGLTILHVVNWAII). The Extracellular segment spans residues 283 to 296 (RSIDPNDCCQLNRL). Residues 297 to 317 (GSITFLSFNLLLTCFFSECCV) traverse the membrane as a helical segment. Residues 318–367 (KTYNSISYILHQIGCLPTAEEFQMLKMGLKEYILQMQHLKLLFTCGGLFD) lie on the Cytoplasmic side of the membrane. Residues 368–388 (INIKLFGGMLVTLCGYVIIIV) traverse the membrane as a helical segment. Topologically, residues 389-408 (QFKIQDFALIGYRQNTSDTS) are extracellular. Asn403 carries N-linked (GlcNAc...) asparagine glycosylation.

It belongs to the insect chemoreceptor superfamily. Gustatory receptor (GR) family. Gr2a subfamily.

The protein resides in the cell membrane. In terms of biological role, probable gustatory receptor which mediates acceptance or avoidance behavior, depending on its substrates. This Drosophila melanogaster (Fruit fly) protein is Putative gustatory receptor 98c (Gr98c).